We begin with the raw amino-acid sequence, 424 residues long: Acetyl-CoA acetyltransferase, mitochondrial (424 aa).

The N-terminal 30 residues, 1-30, are a transit peptide targeting the mitochondrion; the sequence is MAALAVLHGVVRRPLLRGLLQEVRCLGRSY. K63 is modified (N6-acetyllysine; alternate). At K63 the chain carries N6-succinyllysine; alternate. The residue at position 75 (K75) is an N6-succinyllysine. C123 serves as the catalytic Acyl-thioester intermediate. K171, K178, K187, and K199 each carry N6-acetyllysine; alternate. An N6-succinyllysine; alternate mark is found at K171, K178, K187, and K199. Residue S204 is modified to Phosphoserine. A CoA-binding site is contributed by Y216. Y216 lines the K(+) pocket. 2 positions are modified to N6-acetyllysine; alternate: K220 and K227. 2 positions are modified to N6-succinyllysine; alternate: K220 and K227. K240 carries the N6-succinyllysine modification. The residue at position 242 (K242) is an N6-acetyllysine; alternate. At K242 the chain carries N6-succinyllysine; alternate. N6-acetyllysine occurs at positions 248 and 254. CoA is bound by residues 255 to 257 and K260; that span reads RVD. The residue at position 260 (K260) is an N6-acetyllysine; alternate. The residue at position 260 (K260) is an N6-succinyllysine; alternate. K263 and K265 each carry N6-succinyllysine. Position 270 is an N6-acetyllysine (K270). Positions 277, 278, and 280 each coordinate K(+). S281 lines the CoA pocket. K335 bears the N6-acetyllysine mark. Residue V378 coordinates K(+). C410 functions as the Proton donor/acceptor in the catalytic mechanism.

The protein belongs to the thiolase-like superfamily. Thiolase family. Homotetramer. Succinylation at Lys-265, adjacent to a coenzyme A binding site. Desuccinylated by SIRT5.

The protein localises to the mitochondrion. It carries out the reaction 2 acetyl-CoA = acetoacetyl-CoA + CoA. The catalysed reaction is propanoyl-CoA + acetyl-CoA = 2-methyl-3-oxobutanoyl-CoA + CoA. The protein operates within lipid metabolism; fatty acid beta-oxidation. With respect to regulation, activated by potassium ions, but not sodium ions. In terms of biological role, this is one of the enzymes that catalyzes the last step of the mitochondrial beta-oxidation pathway, an aerobic process breaking down fatty acids into acetyl-CoA. Using free coenzyme A/CoA, catalyzes the thiolytic cleavage of medium- to long-chain 3-oxoacyl-CoAs into acetyl-CoA and a fatty acyl-CoA shortened by two carbon atoms. The activity of the enzyme is reversible and it can also catalyze the condensation of two acetyl-CoA molecules into acetoacetyl-CoA. Thereby, it plays a major role in ketone body metabolism. The chain is Acetyl-CoA acetyltransferase, mitochondrial (Acat1) from Rattus norvegicus (Rat).